The chain runs to 62 residues: Mastoparan-AF (62 aa).

The signal sequence occupies residues 1 to 25 (MKNTILILFTAFIALLGFFGMSAEA). 4 AXPX repeats span residues 25–28 (ADPI), 29–32 (ADPI), 33–36 (ADPI), and 43–46 (ADPE). The propeptide occupies 26–47 (DPIADPIADPISGPNAEADPEA). Residue Phe61 is modified to Phenylalanine amide.

This sequence belongs to the MCD family. Mastoparan subfamily. Expressed by the venom gland.

It is found in the secreted. The protein resides in the target cell membrane. Its function is as follows. Antimicrobial and mast cell degranulating peptide. Has broad spectrum antibacterial activity against both Gram-positive and Gram-negative bacteria (S.aureus MIC=16-32 ug/ml, S.xylosus MIC=1.5 ug/ml, S.alactolyticus MIC=8 ug/ml, C.koseri MIC=4 ug/ml, E.coli MIC=4-32 ug/ml, K.pneumoniae MIC=32 ug/ml, P.aerugiosa MIC=96 ug/ml, S.choleraesuis MIC=16 ug/ml, S.typhimurium MIC=32 ug/ml, V.parahamelytics MIC=16 ug/ml). Is also active on multi-antibiotic resistant hemolytic E.coli O157:H7. Acts by affecting membrane permeability. On E.coli O157:H7, acts through multiple membrane disruption patterns, including large perforations (full opening) at apical ends (hollow tubes), vesicle budding, forming dents, and membrane corrugation and invagination leading to irregular pits or pores. Exerts 40% lower membrane permeabilization activities on E.coli O157:H7 than on the non-pathogen E.coli BL21. Shows little hemolytic activities on sheep, chicken and human erythrocytes, but with a higher activity on chicken erythrocytes. Its mast cell degranulation activity may be related to the activation of G-protein coupled receptors in mast cells as well as interaction with other proteins located in cell endosomal membranes in the mast cells. This is Mastoparan-AF from Vespa affinis (Lesser banded hornet).